Consider the following 370-residue polypeptide: Queuine tRNA-ribosyltransferase (370 aa).

The active-site Proton acceptor is the D89. Substrate contacts are provided by residues 89–93 (DSGGF), D143, Q185, and G212. Residues 243-249 (GVGKPED) are RNA binding. The active-site Nucleophile is the D262. The segment at 267-271 (TRNAR) is RNA binding; important for wobble base 34 recognition. Zn(2+) contacts are provided by C300, C302, C305, and H331.

The protein belongs to the queuine tRNA-ribosyltransferase family. As to quaternary structure, homodimer. Within each dimer, one monomer is responsible for RNA recognition and catalysis, while the other monomer binds to the replacement base PreQ1. Requires Zn(2+) as cofactor.

The catalysed reaction is 7-aminomethyl-7-carbaguanine + guanosine(34) in tRNA = 7-aminomethyl-7-carbaguanosine(34) in tRNA + guanine. The protein operates within tRNA modification; tRNA-queuosine biosynthesis. Functionally, catalyzes the base-exchange of a guanine (G) residue with the queuine precursor 7-aminomethyl-7-deazaguanine (PreQ1) at position 34 (anticodon wobble position) in tRNAs with GU(N) anticodons (tRNA-Asp, -Asn, -His and -Tyr). Catalysis occurs through a double-displacement mechanism. The nucleophile active site attacks the C1' of nucleotide 34 to detach the guanine base from the RNA, forming a covalent enzyme-RNA intermediate. The proton acceptor active site deprotonates the incoming PreQ1, allowing a nucleophilic attack on the C1' of the ribose to form the product. After dissociation, two additional enzymatic reactions on the tRNA convert PreQ1 to queuine (Q), resulting in the hypermodified nucleoside queuosine (7-(((4,5-cis-dihydroxy-2-cyclopenten-1-yl)amino)methyl)-7-deazaguanosine). In Pseudoalteromonas atlantica (strain T6c / ATCC BAA-1087), this protein is Queuine tRNA-ribosyltransferase.